A 79-amino-acid chain; its full sequence is Defensin-like protein 272 (79 aa).

The signal sequence occupies residues 1 to 24 (MSSKIKFVALLIVVISLLLNNAQS). Intrachain disulfides connect Cys-34-Cys-77, Cys-43-Cys-63, Cys-49-Cys-75, and Cys-53-Cys-76.

Belongs to the DEFL family.

Its subcellular location is the secreted. In Arabidopsis thaliana (Mouse-ear cress), this protein is Defensin-like protein 272.